A 427-amino-acid chain; its full sequence is Enolase 2 (427 aa).

Glutamine 165 serves as a coordination point for (2R)-2-phosphoglycerate. Catalysis depends on glutamate 207, which acts as the Proton donor. 3 residues coordinate Mg(2+): aspartate 244, glutamate 287, and aspartate 314. Positions 339, 368, 369, and 390 each coordinate (2R)-2-phosphoglycerate. The active-site Proton acceptor is lysine 339.

This sequence belongs to the enolase family. In terms of assembly, component of the RNA degradosome, a multiprotein complex involved in RNA processing and mRNA degradation. Mg(2+) serves as cofactor.

The protein resides in the cytoplasm. The protein localises to the secreted. Its subcellular location is the cell surface. The enzyme catalyses (2R)-2-phosphoglycerate = phosphoenolpyruvate + H2O. It functions in the pathway carbohydrate degradation; glycolysis; pyruvate from D-glyceraldehyde 3-phosphate: step 4/5. Functionally, catalyzes the reversible conversion of 2-phosphoglycerate (2-PG) into phosphoenolpyruvate (PEP). It is essential for the degradation of carbohydrates via glycolysis. The polypeptide is Enolase 2 (Pseudomonas syringae pv. syringae (strain B728a)).